Consider the following 186-residue polypeptide: Auxin-responsive protein IAA4 (186 aa).

The EAR-like (transcriptional repression) signature appears at 18-22 (LRLGL). The tract at residues 25-62 (TEETVSCGKSNKRVLPEATEKEIESTGKTETASPPKAQ) is disordered. Positions 38-51 (VLPEATEKEIESTG) are enriched in basic and acidic residues. A PB1 domain is found at 88–175 (GNYVKVSMDG…SCKRLRIMKG (88 aa)).

This sequence belongs to the Aux/IAA family. Homodimers and heterodimers. Interacts with TPL. Preferentially expressed in stems, leaves and flowers.

The protein localises to the nucleus. Its function is as follows. Aux/IAA proteins are short-lived transcriptional factors that function as repressors of early auxin response genes at low auxin concentrations. Repression is thought to result from the interaction with auxin response factors (ARFs), proteins that bind to the auxin-responsive promoter element (AuxRE). Formation of heterodimers with ARF proteins may alter their ability to modulate early auxin response genes expression. In Arabidopsis thaliana (Mouse-ear cress), this protein is Auxin-responsive protein IAA4 (IAA4).